Reading from the N-terminus, the 145-residue chain is Large ribosomal subunit protein uL15 (145 aa).

The interval 1–50 is disordered; it reads MLHTIKPVTNARKSTKRLGRGPGSGTGKTSGKGHKGQLARSGKTLRPGFE. Over residues 20–30 the composition is skewed to gly residues; that stretch reads RGPGSGTGKTS.

The protein belongs to the universal ribosomal protein uL15 family. As to quaternary structure, part of the 50S ribosomal subunit.

Binds to the 23S rRNA. The protein is Large ribosomal subunit protein uL15 of Aster yellows witches'-broom phytoplasma (strain AYWB).